A 244-amino-acid chain; its full sequence is Rho-related GTP-binding protein RhoE (244 aa).

Gly30–Thr37 serves as a coordination point for GTP. The short motif at Tyr52–Tyr60 is the Effector region element. GTP is bound by residues Asp77–Ser81 and Cys135–Asp138. Cys241 is subject to Cysteine methyl ester. A lipid anchor (S-farnesyl cysteine) is attached at Cys241. A propeptide spans Thr242–Met244 (removed in mature form).

Belongs to the small GTPase superfamily. Rho family. In terms of assembly, binds ROCK1. Interacts with UBXD5.

The protein resides in the cell membrane. Binds GTP but lacks intrinsic GTPase activity and is resistant to Rho-specific GTPase-activating proteins. The polypeptide is Rho-related GTP-binding protein RhoE (RND3) (Sus scrofa (Pig)).